The sequence spans 487 residues: Kynureninase 1 (487 aa).

Residues leucine 149, threonine 150, phenylalanine 177–aspartate 180, serine 234, aspartate 263, histidine 266, and tyrosine 288 contribute to the pyridoxal 5'-phosphate site. Lysine 289 carries the N6-(pyridoxal phosphate)lysine modification. Pyridoxal 5'-phosphate contacts are provided by tryptophan 329 and asparagine 357.

This sequence belongs to the kynureninase family. As to quaternary structure, homodimer. Requires pyridoxal 5'-phosphate as cofactor.

It localises to the cytoplasm. The catalysed reaction is L-kynurenine + H2O = anthranilate + L-alanine + H(+). It carries out the reaction 3-hydroxy-L-kynurenine + H2O = 3-hydroxyanthranilate + L-alanine + H(+). It participates in amino-acid degradation; L-kynurenine degradation; L-alanine and anthranilate from L-kynurenine: step 1/1. Its pathway is cofactor biosynthesis; NAD(+) biosynthesis; quinolinate from L-kynurenine: step 2/3. In terms of biological role, catalyzes the cleavage of L-kynurenine (L-Kyn) and L-3-hydroxykynurenine (L-3OHKyn) into anthranilic acid (AA) and 3-hydroxyanthranilic acid (3-OHAA), respectively. The polypeptide is Kynureninase 1 (bna5-1) (Emericella nidulans (strain FGSC A4 / ATCC 38163 / CBS 112.46 / NRRL 194 / M139) (Aspergillus nidulans)).